Here is a 159-residue protein sequence, read N- to C-terminus: uncharacterized protein (159 aa).

The N-acetyltransferase domain maps to 7 to 151 (LLINYKTLEE…NPLIWEPAHI (145 aa)).

This is an uncharacterized protein from Bacillus pumilus (strain SAFR-032).